The following is a 686-amino-acid chain: Antigen peptide transporter 2 (686 aa).

The Lumenal portion of the chain corresponds to 1–6; the sequence is MRLPDL. A helical transmembrane segment spans residues 7–27; it reads RPWTSLLLVDAALLWLLQGPL. Over 28 to 56 the chain is Cytoplasmic; sequence GTLLPQGLPGLWLEGTLRLGGLWGLLKLR. Residues 57–77 traverse the membrane as a helical segment; the sequence is GLLGFVGTLLLPLCLATPLTV. Residues 78 to 98 are Lumenal-facing; that stretch reads SLRALVAGASRAPPARVASAP. The helical transmembrane segment at 99-119 threads the bilayer; sequence WSWLLVGYGAAGLSWSLWAVL. Residues 120 to 148 are Cytoplasmic-facing; the sequence is SPPGAQEKEQDQVNNKVLMWRLLKLSRPD. Residues 149-169 traverse the membrane as a helical segment; it reads LPLLVAAFFFLVLAVLGETLI. The ABC transmembrane type-1 domain occupies 152 to 435; the sequence is LVAAFFFLVL…LVYIYGDMLS (284 aa). Residues 170–187 are Lumenal-facing; sequence PHYSGRVIDILGGDFDPH. A helical membrane pass occupies residues 188-208; sequence AFASAIFFMCLFSFGSSLSAG. The Cytoplasmic portion of the chain corresponds to 209–266; the sequence is CRGGCFTYTMSRINLRIREQLFSSLLRQDLGFFQETKTGELNSRLSSDTTLMSNWLPL. Residues 267 to 287 traverse the membrane as a helical segment; sequence NANVLLRSLVKVVGLYGFMLS. Over 288 to 293 the chain is Lumenal; that stretch reads ISPRLT. A helical membrane pass occupies residues 294 to 314; sequence LLSLLHMPFTIAAEKVYNTRH. The segment at 301–389 is part of the peptide-binding site; that stretch reads PFTIAAEKVY…RRVLHLGVQM (89 aa). Topologically, residues 315-374 are cytoplasmic; the sequence is QEVLREIQDAVARAGQVVREAVGGLQTVRSFGAEEHEVCRYKEALEQCRQLYWRRDLERA. The helical transmembrane segment at 375-395 threads the bilayer; sequence LYLLVRRVLHLGVQMLMLSCG. Residues 396 to 408 are Lumenal-facing; the sequence is LQQMQDGELTQGS. A helical transmembrane segment spans residues 409–429; that stretch reads LLSFMIYQESVGSYVQTLVYI. Positions 414 to 433 are part of the peptide-binding site; sequence IYQESVGSYVQTLVYIYGDM. Topologically, residues 430–686 are cytoplasmic; that stretch reads YGDMLSNVGA…EGKLQKLAQL (257 aa). Residues 468–686 form the ABC transporter domain; the sequence is VKFQDVSFAY…EGKLQKLAQL (219 aa). An ATP-binding site is contributed by 503-510; sequence GPNGSGKS.

This sequence belongs to the ABC transporter superfamily. ABCB family. MHC peptide exporter (TC 3.A.1.209) subfamily. Heterodimer of TAP1 and TAP2 (TAP1-TAP2). A component of the peptide loading complex (PLC), interacts via TAPBP with MHCI heterodimer; this interaction mediates peptide-MHCI assembly. Recruits TAPBP in a 1:1 stoichiometry. Interacts with classical MHCI such as HLA-A*02-B2M; this interaction is obligatory for the loading of peptide epitopes. Interacts with non-classical MHCI molecules including HLA-E-B2M and HLA-F-B2M as well as PLC component CALR before the peptide loading. In terms of assembly, (Microbial infection) Interacts with Epstein-Barr virus BLNF2a. As to quaternary structure, (Microbial infection) Interacts with herpes simplex virus US12/ICP47. (Microbial infection) Interacts with adenovirus E3-19K glycoprotein, which binds TAP1-TAP2 and acts as a TAPBP inhibitor, preventing TAP1-TAP2 association with MHCI. Requires Mg(2+) as cofactor.

Its subcellular location is the endoplasmic reticulum membrane. The catalysed reaction is a peptide antigen(in) + ATP + H2O = a peptide antigen(out) + ADP + phosphate + H(+). With respect to regulation, inhibited at high ER lumenal peptide concentrations. Its activity is regulated as follows. (Microbial infection) Inhibited by herpes simplex virus US12/ICP47 protein, which blocks the peptide-binding site of TAP1-TAP2. (Microbial infection) Inhibited by human cytomegalovirus US6 glycoprotein, which binds to the lumenal side of TAP1-TAP2 complex and inhibits peptide translocation by specifically blocking ATP-binding and preventing TAP1-TAP2 conformational rearrangement induced by peptide binding. Functionally, ABC transporter associated with antigen processing. In complex with TAP1 mediates unidirectional translocation of peptide antigens from cytosol to endoplasmic reticulum (ER) for loading onto MHC class I (MHCI) molecules. Uses the chemical energy of ATP to export peptides against the concentration gradient. During the transport cycle alternates between 'inward-facing' state with peptide binding site facing the cytosol to 'outward-facing' state with peptide binding site facing the ER lumen. Peptide antigen binding to ATP-loaded TAP1-TAP2 induces a switch to hydrolysis-competent 'outward-facing' conformation ready for peptide loading onto nascent MHCI molecules. Subsequently ATP hydrolysis resets the transporter to the 'inward facing' state for a new cycle. Typically transports intracellular peptide antigens of 8 to 13 amino acids that arise from cytosolic proteolysis via IFNG-induced immunoproteasome. Binds peptides with free N- and C-termini, the first three and the C-terminal residues being critical. Preferentially selects peptides having a highly hydrophobic residue at position 3 and hydrophobic or charged residues at the C-terminal anchor. Proline at position 2 has the most destabilizing effect. As a component of the peptide loading complex (PLC), acts as a molecular scaffold essential for peptide-MHCI assembly and antigen presentation. This is Antigen peptide transporter 2 from Homo sapiens (Human).